The primary structure comprises 103 residues: G0/G1 switch protein 2 (103 aa).

Residues 80-103 (LQEKGKQQDTVLGGRALSNRQHAS) are disordered.

Directly interacts with BCL2; this interaction prevents the formation of the anti-apoptotic BAX-BCL2 complex. In terms of tissue distribution, widely expressed with highest levels in peripheral blood, skeletal muscle and heart, followed by kidney and liver.

The protein resides in the mitochondrion. Its function is as follows. Promotes apoptosis by binding to BCL2, hence preventing the formation of protective BCL2-BAX heterodimers. The chain is G0/G1 switch protein 2 (G0S2) from Homo sapiens (Human).